Consider the following 326-residue polypeptide: Aquaporin-3 (326 aa).

A run of 2 helical transmembrane segments spans residues 24–44 and 64–84; these read LAEF…IITA and LAFG…GISG. Positions 88 to 90 match the NPA 1 motif; the sequence is NPA. Residues 107-127 traverse the membrane as a helical segment; it reads LVYIFMQYMGAFFAASILYAV. Asn146 carries N-linked (GlcNAc...) asparagine glycosylation. Transmembrane regions (helical) follow at residues 166–186 and 196–216; these read IFDA…IIDP and IPLY…YNAG. The short motif at 220-222 is the NPA 2 element; sequence NPA. A helical transmembrane segment spans residues 247–267; the sequence is LWWLVPVIGPHVGGLLGGVTY. N-linked (GlcNAc...) asparagine glycosylation occurs at Asn294.

This sequence belongs to the MIP/aquaporin (TC 1.A.8) family.

It is found in the cell membrane. Its function is as follows. Aquaglyceroporin that may modulate the water content and osmolytes during anhydrobiosis. The chain is Aquaporin-3 from Milnesium tardigradum (Water bear).